Consider the following 196-residue polypeptide: Alpha-crystallin A chain (196 aa).

The residue at position 1 (methionine 1) is an N-acetylmethionine. Residues 1–63 (MDVTIQHPWF…RTVLDSCISE (63 aa)) are required for complex formation with BFSP1 and BFSP2. At glutamine 6 the chain carries Deamidated glutamine; partial. Serine 45 carries the post-translational modification Phosphoserine. Glutamine 50 is subject to Deamidated glutamine; partial. Positions 76–185 (HAGNPENNPI…GHSERAIPVS (110 aa)) constitute a sHSP domain. N6-acetyllysine is present on residues lysine 93 and lysine 122. Zn(2+) is bound at residue histidine 123. At asparagine 124 the chain carries Deamidated asparagine; partial. Positions 125 and 130 each coordinate Zn(2+). A Phosphoserine modification is found at serine 145. Glutamine 170 is subject to Deamidated glutamine; partial. Positions 170–196 (QSGLDAGHSERAIPVSQEEKPSSAPLF) are disordered. Basic and acidic residues predominate over residues 176 to 190 (GHSERAIPVSQEEKP). Residue histidine 177 participates in Zn(2+) binding. An O-linked (GlcNAc) serine glycan is attached at serine 185.

It belongs to the small heat shock protein (HSP20) family. In terms of assembly, heteromer composed of three CRYAA and one CRYAB subunits. Inter-subunit bridging via zinc ions enhances stability, which is crucial as there is no protein turn over in the lens. Can also form homodimers and homotetramers (dimers of dimers) which serve as the building blocks of homooligomers. Within homooligomers, the zinc-binding motif is created from residues of 3 different molecules. His-123 and Glu-125 from one molecule are ligands of the zinc ion, and His-130 and His-177 residues from additional molecules complete the site with tetrahedral coordination geometry. Part of a complex required for lens intermediate filament formation composed of BFSP1, BFSP2 and CRYAA. Acetylation at Lys-93 may increase chaperone activity. In terms of processing, undergoes age-dependent proteolytical cleavage at the C-terminus.

It localises to the cytoplasm. Its subcellular location is the nucleus. Its function is as follows. Contributes to the transparency and refractive index of the lens. Acts as a chaperone, preventing aggregation of various proteins under a wide range of stress conditions. Required for the correct formation of lens intermediate filaments as part of a complex composed of BFSP1, BFSP2 and CRYAA. This chain is Alpha-crystallin A chain (CRYAA), found in Spalax ehrenbergi (Middle East blind mole rat).